The chain runs to 353 residues: Photosystem II protein D1 (353 aa).

An N-acetylthreonine modification is found at Thr2. Position 2 is a phosphothreonine (Thr2). 3 consecutive transmembrane segments (helical) span residues Tyr29 to Ser46, His118 to Leu133, and Trp142 to Ala156. Residue His118 participates in chlorophyll a binding. Tyr126 contributes to the pheophytin a binding site. The [CaMn4O5] cluster site is built by Asp170 and Glu189. Residues Phe197–Leu218 traverse the membrane as a helical segment. A chlorophyll a-binding site is contributed by His198. Residues His215 and Ser264–Phe265 contribute to the a quinone site. His215 is a binding site for Fe cation. His272 serves as a coordination point for Fe cation. A helical transmembrane segment spans residues Phe274–Leu288. 4 residues coordinate [CaMn4O5] cluster: His332, Glu333, Asp342, and Ala344. Positions Ala345 to Gly353 are excised as a propeptide.

Belongs to the reaction center PufL/M/PsbA/D family. PSII is composed of 1 copy each of membrane proteins PsbA, PsbB, PsbC, PsbD, PsbE, PsbF, PsbH, PsbI, PsbJ, PsbK, PsbL, PsbM, PsbT, PsbX, PsbY, PsbZ, Psb30/Ycf12, at least 3 peripheral proteins of the oxygen-evolving complex and a large number of cofactors. It forms dimeric complexes. The D1/D2 heterodimer binds P680, chlorophylls that are the primary electron donor of PSII, and subsequent electron acceptors. It shares a non-heme iron and each subunit binds pheophytin, quinone, additional chlorophylls, carotenoids and lipids. D1 provides most of the ligands for the Mn4-Ca-O5 cluster of the oxygen-evolving complex (OEC). There is also a Cl(-1) ion associated with D1 and D2, which is required for oxygen evolution. The PSII complex binds additional chlorophylls, carotenoids and specific lipids. serves as cofactor. In terms of processing, tyr-161 forms a radical intermediate that is referred to as redox-active TyrZ, YZ or Y-Z. Post-translationally, C-terminally processed by CTPA; processing is essential to allow assembly of the oxygen-evolving complex and thus photosynthetic growth.

It is found in the plastid. The protein resides in the chloroplast thylakoid membrane. The catalysed reaction is 2 a plastoquinone + 4 hnu + 2 H2O = 2 a plastoquinol + O2. Functionally, photosystem II (PSII) is a light-driven water:plastoquinone oxidoreductase that uses light energy to abstract electrons from H(2)O, generating O(2) and a proton gradient subsequently used for ATP formation. It consists of a core antenna complex that captures photons, and an electron transfer chain that converts photonic excitation into a charge separation. The D1/D2 (PsbA/PsbD) reaction center heterodimer binds P680, the primary electron donor of PSII as well as several subsequent electron acceptors. This is Photosystem II protein D1 from Barbarea verna (Land cress).